A 236-amino-acid polypeptide reads, in one-letter code: Small ribosomal subunit protein uS2c (236 aa).

Belongs to the universal ribosomal protein uS2 family.

The protein localises to the plastid. It localises to the chloroplast. This chain is Small ribosomal subunit protein uS2c (rps2), found in Cucumis sativus (Cucumber).